Here is a 199-residue protein sequence, read N- to C-terminus: Probable GTP-binding protein EngB (199 aa).

The region spanning 21-196 (TKPEYAFIGR…LTYIDEINKQ (176 aa)) is the EngB-type G domain. GTP contacts are provided by residues 29–36 (GRSNVGKS), 56–60 (GKTQL), 74–77 (DLPG), 141–144 (TKID), and 175–177 (TSS). Positions 36 and 58 each coordinate Mg(2+).

The protein belongs to the TRAFAC class TrmE-Era-EngA-EngB-Septin-like GTPase superfamily. EngB GTPase family. Mg(2+) is required as a cofactor.

In terms of biological role, necessary for normal cell division and for the maintenance of normal septation. This Cytophaga hutchinsonii (strain ATCC 33406 / DSM 1761 / CIP 103989 / NBRC 15051 / NCIMB 9469 / D465) protein is Probable GTP-binding protein EngB.